Consider the following 150-residue polypeptide: uncharacterized protein (150 aa).

3 consecutive transmembrane segments (helical) span residues 50 to 70 (VVSV…VIHL), 80 to 100 (LYIT…QLWL), and 127 to 147 (KVVI…FFIE).

The protein localises to the membrane. This is an uncharacterized protein from Schizosaccharomyces pombe (strain 972 / ATCC 24843) (Fission yeast).